The sequence spans 180 residues: MTDEPVKVVNKWDGPTVKNALDEVVKKILNDKVGWTESHNLMNLRLLISFIGVAFSAFACGYDYYEPFPKSKIVLAVCSVSYFICMGILQMYQWYVEKDCIYEATEVDGKQSRKWAWSSEIKAHDDKYTLSAEFKKEGRSGQGKITKSIGAYIDNDGEIIVPLVKKEVDDLYNRLIRSEQ.

The Cytoplasmic segment spans residues 1–45 (MTDEPVKVVNKWDGPTVKNALDEVVKKILNDKVGWTESHNLMNLR). The chain crosses the membrane as a helical span at residues 46–66 (LLISFIGVAFSAFACGYDYYE). Residues 67 to 72 (PFPKSK) are Lumenal-facing. A helical membrane pass occupies residues 73 to 93 (IVLAVCSVSYFICMGILQMYQ). At 94 to 180 (WYVEKDCIYE…LYNRLIRSEQ (87 aa)) the chain is on the cytoplasmic side.

The protein belongs to the SPCS2 family. In terms of assembly, component of the signal peptidase complex (SPC) composed of a catalytic subunit sec-11 and three accessory subunits spcs-1, spcs-2 and spcs-3. The complex induces a local thinning of the ER membrane which is used to measure the length of the signal peptide (SP) h-region of protein substrates. This ensures the selectivity of the complex towards h-regions shorter than 18-20 amino acids.

The protein localises to the endoplasmic reticulum membrane. Component of the signal peptidase complex (SPC) which catalyzes the cleavage of N-terminal signal sequences from nascent proteins as they are translocated into the lumen of the endoplasmic reticulum. Enhances the enzymatic activity of SPC and facilitates the interactions between different components of the translocation site. The chain is Signal peptidase complex subunit 2 from Caenorhabditis elegans.